The primary structure comprises 212 residues: uncharacterized protein (212 aa).

Positions 53, 74, and 97 each coordinate S-adenosyl-L-methionine.

Belongs to the methyltransferase superfamily. YrrT family.

Could be a S-adenosyl-L-methionine-dependent methyltransferase. This is an uncharacterized protein from Bacillus cereus (strain 03BB102).